Consider the following 542-residue polypeptide: CTP synthase (542 aa).

Residues 1–265 (MTRYIFVTGG…DDIVVERFGL (265 aa)) are amidoligase domain. Position 13 (S13) interacts with CTP. Position 13 (S13) interacts with UTP. Residues 14 to 19 (SLGKGI) and D71 contribute to the ATP site. Residues D71 and E139 each coordinate Mg(2+). Residues 146–148 (DIE), 186–191 (KTKPTQ), and K222 each bind CTP. UTP-binding positions include 186-191 (KTKPTQ) and K222. Residues 290–541 (TIAMVGKYME…VNAALKYSGK (252 aa)) form the Glutamine amidotransferase type-1 domain. G351 is an L-glutamine binding site. The Nucleophile; for glutamine hydrolysis role is filled by C378. L-glutamine contacts are provided by residues 379–382 (LGMQ), E402, and R469. Catalysis depends on residues H514 and E516.

The protein belongs to the CTP synthase family. In terms of assembly, homotetramer.

The catalysed reaction is UTP + L-glutamine + ATP + H2O = CTP + L-glutamate + ADP + phosphate + 2 H(+). The enzyme catalyses L-glutamine + H2O = L-glutamate + NH4(+). It carries out the reaction UTP + NH4(+) + ATP = CTP + ADP + phosphate + 2 H(+). It functions in the pathway pyrimidine metabolism; CTP biosynthesis via de novo pathway; CTP from UDP: step 2/2. Allosterically activated by GTP, when glutamine is the substrate; GTP has no effect on the reaction when ammonia is the substrate. The allosteric effector GTP functions by stabilizing the protein conformation that binds the tetrahedral intermediate(s) formed during glutamine hydrolysis. Inhibited by the product CTP, via allosteric rather than competitive inhibition. Its function is as follows. Catalyzes the ATP-dependent amination of UTP to CTP with either L-glutamine or ammonia as the source of nitrogen. Regulates intracellular CTP levels through interactions with the four ribonucleotide triphosphates. The sequence is that of CTP synthase from Pseudomonas aeruginosa (strain LESB58).